Consider the following 325-residue polypeptide: Pyruvate dehydrogenase E1 component subunit beta (325 aa).

Glu60 is a thiamine diphosphate binding site.

As to quaternary structure, heterodimer of an alpha and a beta chain. Thiamine diphosphate serves as cofactor.

The catalysed reaction is N(6)-[(R)-lipoyl]-L-lysyl-[protein] + pyruvate + H(+) = N(6)-[(R)-S(8)-acetyldihydrolipoyl]-L-lysyl-[protein] + CO2. In terms of biological role, the pyruvate dehydrogenase complex catalyzes the overall conversion of pyruvate to acetyl-CoA and CO(2). It contains multiple copies of three enzymatic components: pyruvate dehydrogenase (E1), dihydrolipoamide acetyltransferase (E2) and lipoamide dehydrogenase (E3). This chain is Pyruvate dehydrogenase E1 component subunit beta (pdhB), found in Staphylococcus epidermidis (strain ATCC 35984 / DSM 28319 / BCRC 17069 / CCUG 31568 / BM 3577 / RP62A).